We begin with the raw amino-acid sequence, 174 residues long: Caltractin ICL1e (174 aa).

Residues 1–33 are disordered; that stretch reads MSKKQQAPVAQKPVGKQQQVNRKPQDRPGLTED. EF-hand domains are found at residues 33 to 68, 88 to 103, 105 to 140, and 141 to 174; these read DEIE…LGFD, IDFD…KLGN, ESRD…LGET, and MTAE…KRTF.

The protein belongs to the centrin family. Monomer.

It is found in the cytoplasm. It localises to the cytoskeleton. Its function is as follows. Plays a fundamental role in microtubule organizing center structure and function. Component of the infraciliary lattice (ICL) and the ciliary basal bodies. This chain is Caltractin ICL1e (Icl1e), found in Paramecium tetraurelia.